We begin with the raw amino-acid sequence, 504 residues long: Pentatricopeptide repeat-containing protein At1g09220, mitochondrial (504 aa).

Residues 1 to 87 constitute a mitochondrion transit peptide; the sequence is MFLFSSRRIT…FLFNPLLRCY (87 aa). PPR repeat units lie at residues 76-110, 120-156, 157-187, 188-222, 223-253, 255-289, 291-321, 324-358, 359-390, and 396-430; these read KLFL…HFLS, DSFT…GFES, HVYV…MPER, NPVT…TVVS, WTTI…DAIK, NEIT…GFVP, DIRV…IPNG, NLVS…GLKP, NRVT…MVNE, and DVKH…EKAV. The segment at 431 to 504 is type E motif; degenerate; sequence VWRMLLGACS…AKLPGHSQVT (74 aa).

This sequence belongs to the PPR family. PCMP-E subfamily.

It is found in the mitochondrion. In Arabidopsis thaliana (Mouse-ear cress), this protein is Pentatricopeptide repeat-containing protein At1g09220, mitochondrial (PCMP-E25).